The sequence spans 262 residues: uncharacterized protein (262 aa).

The next 6 membrane-spanning stretches (helical) occupy residues 7–27 (LAVA…LAHM), 58–78 (DTLG…IVFG), 114–134 (FLAF…VLGG), 140–160 (GGFQ…IAFG), 179–199 (GALG…YYLF), and 216–236 (IITA…VLAG).

It is found in the cell membrane. This is an uncharacterized protein from Methanocaldococcus jannaschii (strain ATCC 43067 / DSM 2661 / JAL-1 / JCM 10045 / NBRC 100440) (Methanococcus jannaschii).